Here is a 238-residue protein sequence, read N- to C-terminus: 6-phosphogluconolactonase (238 aa).

This sequence belongs to the glucosamine/galactosamine-6-phosphate isomerase family. 6-phosphogluconolactonase subfamily.

It carries out the reaction 6-phospho-D-glucono-1,5-lactone + H2O = 6-phospho-D-gluconate + H(+). The protein operates within carbohydrate degradation; pentose phosphate pathway; D-ribulose 5-phosphate from D-glucose 6-phosphate (oxidative stage): step 2/3. Its function is as follows. Hydrolysis of 6-phosphogluconolactone to 6-phosphogluconate. The protein is 6-phosphogluconolactonase (pgl) of Pseudomonas aeruginosa (strain ATCC 15692 / DSM 22644 / CIP 104116 / JCM 14847 / LMG 12228 / 1C / PRS 101 / PAO1).